The following is a 349-amino-acid chain: KH domain-containing, RNA-binding, signal transduction-associated protein 2 (349 aa).

Residues 65–135 form the KH domain; the sequence is LIPVKQYPKF…HLSDELHVLI (71 aa). 2 disordered regions span residues 181–263 and 321–349; these read SEES…PPPA and EWAT…YGRY. The segment covering 218 to 231 has biased composition (low complexity); sequence RGVLTPRGTTVTRG. Residues arginine 230 and arginine 240 each carry the omega-N-methylarginine modification. A compositionally biased stretch (basic and acidic residues) spans 340–349; that stretch reads GYREHPYGRY.

Belongs to the KHDRBS family. In terms of assembly, self-associates to form homooligomers. Interacts with KHDRBS1/SAM68; heterooligomer formation of KHDRBS family proteins may modulate RNA substrate specificity. Interacts with RBMX, SAFB, SFRS9 and YTHDC1. Interacts with FYN and PLCG1 (via SH3 domain). Interacts (phosphorylated) with FYN, GRB2, PLCG1 and RASA1 (via SH2 domain). Methylated. In terms of processing, tyrosine phosphorylated by FYN, PTK6 and SRC. Tyrosine phosphorylated by SRC during mitosis. Expressed in heart, skin, brain, colon, spleen, kidney, cervix and testis. In adult cerebellum expressed predominantly in Purkinje cells and in the hippocampus is abundantly expressed in glutamatergic dentate granule cells and in specific inhibitory Schaffer collateral-associated and path-associated interneurons; expression is restricted to neuronal subpopulations largely non-overlapping with expression of KHDRBS3/SLM-2 (at protein level).

The protein localises to the nucleus. Functionally, RNA-binding protein that plays a role in the regulation of alternative splicing and influences mRNA splice site selection and exon inclusion. Binds both poly(A) and poly(U) homopolymers. Phosphorylation by PTK6 inhibits its RNA-binding ability. Induces an increased concentration-dependent incorporation of exon in CD44 pre-mRNA by direct binding to purine-rich exonic enhancer. Can regulate alternative splicing of neurexins NRXN1-3 in the laminin G-like domain 6 containing the evolutionary conserved neurexin alternative spliced segment 4 (AS4) involved in neurexin selective targeting to postsynaptic partners. Regulates cell-type specific alternative splicing of NRXN1 at AS4 and acts synergystically with SAM68 in exon skipping. In contrast acts antagonistically with SAM68 in NRXN3 exon skipping at AS4. Its phosphorylation by FYN inhibits its ability to regulate splice site selection. May function as an adapter protein for Src kinases during mitosis. In Mus musculus (Mouse), this protein is KH domain-containing, RNA-binding, signal transduction-associated protein 2 (Khdrbs2).